Consider the following 247-residue polypeptide: Uridylate kinase (247 aa).

Residue 15–18 (KLSG) participates in ATP binding. An involved in allosteric activation by GTP region spans residues 23-28 (GEEGFG). A UMP-binding site is contributed by G57. G58 and R62 together coordinate ATP. UMP-binding positions include D77 and 138-145 (TGNPFFTT). Residues T165, Y171, and D174 each contribute to the ATP site.

This sequence belongs to the UMP kinase family. In terms of assembly, homohexamer.

The protein resides in the cytoplasm. It carries out the reaction UMP + ATP = UDP + ADP. The protein operates within pyrimidine metabolism; CTP biosynthesis via de novo pathway; UDP from UMP (UMPK route): step 1/1. Its activity is regulated as follows. Allosterically activated by GTP. Inhibited by UTP. Catalyzes the reversible phosphorylation of UMP to UDP. This Pseudoalteromonas atlantica (strain T6c / ATCC BAA-1087) protein is Uridylate kinase.